Here is a 629-residue protein sequence, read N- to C-terminus: FAST kinase domain-containing protein 4 (629 aa).

The RAP domain occupies 559-617; it reads IAFLRWEFPNFNSRSKDLLGRFVLARRHVLAAGFLVVDVPYYEWLDLKSEWQKTAYLKD.

It belongs to the FAST kinase family.

It is found in the mitochondrion matrix. Its function is as follows. Plays a role in processing of mitochondrial RNA precursors and in stabilization of a subset of mature mitochondrial RNA species, such as MT-CO1, MT-CO2, MT-CYB, MT-CO3, MT-ND3, MT-ND5 and MT-ATP8/6. May play a role in cell cycle progression. The polypeptide is FAST kinase domain-containing protein 4 (Tbrg4) (Rattus norvegicus (Rat)).